The chain runs to 292 residues: MGFVKVVKTKAYYSRYQVQFRRRREGKTDYQQRHRLITQDKNKYNSPKYRLVARITNTDVIAQVVYSKIVGDFVLCAAYAHELPRFGVKVGLTNYASCYATGLLLARRLLAKLKLADLYKGAEKVDGKVFLVKPVDDKPRPFKANLDVGLARTSTGAKVFAVLKGAVDGGIYVPHGETRFAGYNAESKKLNAETLRGYIFGKHVASYMTLLQTEDEDAYKKIFSQYIKNGVAPKDIETIYANAHKAIRANPAPAAKSTKSYKDIKSKNLSKRTLKQKKARVASIKASYKARL.

The protein belongs to the universal ribosomal protein uL18 family. Component of the large ribosomal subunit (LSU).

It localises to the cytoplasm. It is found in the nucleus. Functionally, component of the ribosome, a large ribonucleoprotein complex responsible for the synthesis of proteins in the cell. The small ribosomal subunit (SSU) binds messenger RNAs (mRNAs) and translates the encoded message by selecting cognate aminoacyl-transfer RNA (tRNA) molecules. The large subunit (LSU) contains the ribosomal catalytic site termed the peptidyl transferase center (PTC), which catalyzes the formation of peptide bonds, thereby polymerizing the amino acids delivered by tRNAs into a polypeptide chain. The nascent polypeptides leave the ribosome through a tunnel in the LSU and interact with protein factors that function in enzymatic processing, targeting, and the membrane insertion of nascent chains at the exit of the ribosomal tunnel. The polypeptide is Large ribosomal subunit protein uL18 (rpl5) (Dictyostelium discoideum (Social amoeba)).